The sequence spans 83 residues: uncharacterized protein (83 aa).

The N-terminal stretch at Met1–Ala20 is a signal peptide.

The protein to P.denitrificans and M.extorquens MoxJ.

This is an uncharacterized protein from Paracoccus denitrificans.